The following is a 102-amino-acid chain: Citrate lyase acyl carrier protein (102 aa).

Position 14 is an O-(phosphoribosyl dephospho-coenzyme A)serine (serine 14).

The protein belongs to the CitD family. Oligomer with a subunit composition of (alpha,beta,gamma)6.

It localises to the cytoplasm. Covalent carrier of the coenzyme of citrate lyase. In Streptococcus pyogenes serotype M2 (strain MGAS10270), this protein is Citrate lyase acyl carrier protein.